A 244-amino-acid polypeptide reads, in one-letter code: Phosphoadenosine 5'-phosphosulfate reductase (244 aa).

C239 acts as the Nucleophile; cysteine thiosulfonate intermediate in catalysis.

This sequence belongs to the PAPS reductase family. CysH subfamily.

It is found in the cytoplasm. It carries out the reaction [thioredoxin]-disulfide + sulfite + adenosine 3',5'-bisphosphate + 2 H(+) = [thioredoxin]-dithiol + 3'-phosphoadenylyl sulfate. It participates in sulfur metabolism; hydrogen sulfide biosynthesis; sulfite from sulfate: step 3/3. In terms of biological role, catalyzes the formation of sulfite from phosphoadenosine 5'-phosphosulfate (PAPS) using thioredoxin as an electron donor. The chain is Phosphoadenosine 5'-phosphosulfate reductase from Enterobacter sp. (strain 638).